Here is a 771-residue protein sequence, read N- to C-terminus: Tubulin monoglycylase TTLL3 (771 aa).

Residues 70–106 (PRPSFSQPRRHDHETETTDEGDSSDEDDLGEEVERDD) are disordered. A compositionally biased stretch (acidic residues) spans 86–106 (TTDEGDSSDEDDLGEEVERDD). In terms of domain architecture, TTL spans 220 to 566 (EGEKMGEVHN…RRSERNTDTG (347 aa)). Residues lysine 339, 345–346 (RG), 377–380 (QKYI), 390–392 (KFD), and 434–435 (CN) each bind ATP. An a protein-binding site is contributed by arginine 345. Position 437 (serine 437) interacts with L-glutamate. Positions 512, 525, and 527 each coordinate Mg(2+). An ATP-binding site is contributed by glutamate 525. Disordered stretches follow at residues 605-640 (LIQSHPEPLSKSTNHKSSLLSSPCTSGKENQSEEVK) and 682-713 (TELHHPQRLSHTQPQSDRPHTHRTRSNLPTLY). Residues 614–633 (SKSTNHKSSLLSSPCTSGKE) are compositionally biased toward polar residues.

It depends on Mg(2+) as a cofactor.

It is found in the cytoplasm. Its subcellular location is the cytoskeleton. It localises to the cell projection. The protein localises to the cilium. The protein resides in the cilium axoneme. It is found in the flagellum axoneme. It catalyses the reaction L-glutamyl-[protein] + glycine + ATP = glycyl-L-glutamyl-[protein] + ADP + phosphate + H(+). Its function is as follows. Monoglycylase which modifies alpha- and beta-tubulin, adding a single glycine on the gamma-carboxyl groups of specific glutamate residues to generate monoglycine side chains within the C-terminal tail of tubulin. Not involved in elongation step of the polyglycylation reaction. Preferentially glycylates a beta-tail peptide over the alpha-tail, although shifts its preference toward alpha-tail as beta-tail glutamylation increases. Competes with polyglutamylases for modification site on beta-tubulin substrate, thereby creating an anticorrelation between glycylation and glutamylation reactions. Not involved in elongation step of the polyglycylation reaction. The protein is Tubulin monoglycylase TTLL3 (ttll3) of Danio rerio (Zebrafish).